The sequence spans 427 residues: Glutamate-1-semialdehyde 2,1-aminomutase (427 aa).

Lysine 265 carries the N6-(pyridoxal phosphate)lysine modification.

This sequence belongs to the class-III pyridoxal-phosphate-dependent aminotransferase family. HemL subfamily. In terms of assembly, homodimer. The cofactor is pyridoxal 5'-phosphate.

It is found in the cytoplasm. It catalyses the reaction (S)-4-amino-5-oxopentanoate = 5-aminolevulinate. It participates in porphyrin-containing compound metabolism; protoporphyrin-IX biosynthesis; 5-aminolevulinate from L-glutamyl-tRNA(Glu): step 2/2. The protein is Glutamate-1-semialdehyde 2,1-aminomutase of Burkholderia cenocepacia (strain ATCC BAA-245 / DSM 16553 / LMG 16656 / NCTC 13227 / J2315 / CF5610) (Burkholderia cepacia (strain J2315)).